The primary structure comprises 809 residues: MKIPLKWLKEYLPTDIQPAELAERMTMAGTEVAVLNSHKDKWPNVYVGQIMEVNRHPNADRLVLVKVDWGQGQETVVTGAPNCKVGDKVVFARTGAVLIDGHNGKEIVLKPAVLRGVESCGMVCSERELGLSDEHEGILVLPADALVGMLASEYLGEVILDLELTPNRGDLMCVTGVARELGALIDRLPAISDPDFKATGPDIKEKIEIEINNSKLCTRYTASLIEGIKLGESPDWLKERLIACGMRPINNVVDATNYVMLEFGQPLHAFDYDQIKSRHIIVRPAAEGEVLTTLDGVERKLSPDMLLITEPDRIIALAGVMGGENTEVTEKTSRILLESATFDKQSIRKTARGLKLQSEASARFEKGLSYELAPIALKRATQLILEIAGGQAASGLIDVLPNKKERNGIVLSLAKVNQILGYEKEPPDACKIAKRLGFIWLPEYVPGMEEFGYGATEDMVRIYPGYWRMDIETDIDMIEEVARIAGYHTIPCLPLDKAIPKIETPPLPGMKRFLRQILSGYGFQELISYSFTSREMLSRVSSGAEPEFLAISNPMSSEQEVMRTSLRPSLYASLAANRRFEKDGLRLYELGRVYLPKENKKQEEPEMLCAVIAGGSSQSRWQRNTAGFDFFDVKGIVESMVSRLGLSADFVVSDEHGLSHGYQAGILVGDMPVGILGQVSPQTADKFDITEPVYMFEINLSKLITRAMVRRKFNPINRFPAVERDLALVIDRHITNRQVIDILSEYDLVKNAELFDMYQGKQIAENKKSLAYHLLFQSDTHTLKDEEVDGVMSQILGRLNTETGAVLRS.

The 114-residue stretch at 39–152 (KDKWPNVYVG…ADALVGMLAS (114 aa)) folds into the tRNA-binding domain. The B5 domain maps to 404–492 (KERNGIVLSL…RIAGYHTIPC (89 aa)). 4 residues coordinate Mg(2+): Asp-470, Asp-476, Glu-479, and Glu-480. An FDX-ACB domain is found at 717–808 (NRFPAVERDL…LNTETGAVLR (92 aa)).

Belongs to the phenylalanyl-tRNA synthetase beta subunit family. Type 1 subfamily. In terms of assembly, tetramer of two alpha and two beta subunits. Requires Mg(2+) as cofactor.

It localises to the cytoplasm. The catalysed reaction is tRNA(Phe) + L-phenylalanine + ATP = L-phenylalanyl-tRNA(Phe) + AMP + diphosphate + H(+). The sequence is that of Phenylalanine--tRNA ligase beta subunit from Dehalococcoides mccartyi (strain CBDB1).